The sequence spans 200 residues: 3-isopropylmalate dehydratase small subunit (200 aa).

This sequence belongs to the LeuD family. LeuD type 1 subfamily. In terms of assembly, heterodimer of LeuC and LeuD.

The enzyme catalyses (2R,3S)-3-isopropylmalate = (2S)-2-isopropylmalate. It functions in the pathway amino-acid biosynthesis; L-leucine biosynthesis; L-leucine from 3-methyl-2-oxobutanoate: step 2/4. In terms of biological role, catalyzes the isomerization between 2-isopropylmalate and 3-isopropylmalate, via the formation of 2-isopropylmaleate. The sequence is that of 3-isopropylmalate dehydratase small subunit from Haemophilus influenzae (strain PittEE).